A 145-amino-acid chain; its full sequence is Probable thioredoxin-2 (145 aa).

The 106-residue stretch at 39 to 144 (VFDIDSVEDF…LDDFIEDVLA (106 aa)) folds into the Thioredoxin domain. Residues C68 and C71 each act as nucleophile in the active site. C68 and C71 are disulfide-bonded.

The protein belongs to the thioredoxin family.

Functionally, participates in various redox reactions through the reversible oxidation of its active center dithiol to a disulfide and catalyzes dithiol-disulfide exchange reactions. This Caenorhabditis elegans protein is Probable thioredoxin-2 (trx-2).